Consider the following 526-residue polypeptide: Probable Xaa-Pro aminopeptidase MGG_05684 (526 aa).

4 residues coordinate Mn(2+): Asp-285, Asp-296, Glu-447, and Glu-488.

It belongs to the peptidase M24B family. The cofactor is Mn(2+).

The catalysed reaction is Release of any N-terminal amino acid, including proline, that is linked to proline, even from a dipeptide or tripeptide.. Catalyzes the removal of a penultimate prolyl residue from the N-termini of peptides. In Pyricularia oryzae (strain 70-15 / ATCC MYA-4617 / FGSC 8958) (Rice blast fungus), this protein is Probable Xaa-Pro aminopeptidase MGG_05684.